Here is a 465-residue protein sequence, read N- to C-terminus: Probable glucan endo-1,3-beta-glucosidase eglC (465 aa).

An N-terminal signal peptide occupies residues 1-19 (MFTKTQILALALSIASAEA). Glutamate 128 (proton donor) is an active-site residue. Residue asparagine 183 is glycosylated (N-linked (GlcNAc...) asparagine). Glutamate 239 (nucleophile) is an active-site residue. The N-linked (GlcNAc...) asparagine glycan is linked to asparagine 318. Composition is skewed to low complexity over residues 320 to 333 (SSAS…SAQS) and 380 to 438 (SPSA…ATPA). Disordered regions lie at residues 320 to 356 (SSAS…GHGG) and 380 to 440 (SPSA…PADF). Glycine 442 carries GPI-anchor amidated glycine lipidation. Residues 443-465 (AGSRLSGSIFGAAMLVAALAVAL) constitute a propeptide, removed in mature form.

The protein belongs to the glycosyl hydrolase 17 family. The GPI-anchor is attached to the protein in the endoplasmic reticulum and serves to target the protein to the cell surface. There, the glucosamine-inositol phospholipid moiety is cleaved off and the GPI-modified mannoprotein is covalently attached via its lipidless GPI glycan remnant to the 1,6-beta-glucan of the outer cell wall layer.

Its subcellular location is the cell membrane. The protein localises to the secreted. It localises to the cell wall. It carries out the reaction Hydrolysis of (1-&gt;3)-beta-D-glucosidic linkages in (1-&gt;3)-beta-D-glucans.. In terms of biological role, glucanases play a role in cell expansion during growth, in cell-cell fusion during mating, and in spore release during sporulation. This enzyme may be involved in beta-glucan degradation and also function biosynthetically as a transglycosylase. This is Probable glucan endo-1,3-beta-glucosidase eglC (eglC) from Emericella nidulans (strain FGSC A4 / ATCC 38163 / CBS 112.46 / NRRL 194 / M139) (Aspergillus nidulans).